Consider the following 270-residue polypeptide: tRNA pseudouridine synthase B (270 aa).

D49 acts as the Nucleophile in catalysis.

Belongs to the pseudouridine synthase TruB family. Type 1 subfamily.

The catalysed reaction is uridine(55) in tRNA = pseudouridine(55) in tRNA. Functionally, responsible for synthesis of pseudouridine from uracil-55 in the psi GC loop of transfer RNAs. The protein is tRNA pseudouridine synthase B of Bartonella quintana (strain Toulouse) (Rochalimaea quintana).